We begin with the raw amino-acid sequence, 406 residues long: Tyrosine--tRNA ligase (406 aa).

An L-tyrosine-binding site is contributed by Y35. Residues 40 to 49 carry the 'HIGH' region motif; sequence PTADSLHVGH. The L-tyrosine site is built by Y168 and Q172. The 'KMSKS' region signature appears at 228 to 232; the sequence is KMGKT. An ATP-binding site is contributed by K231. The region spanning 340–404 is the S4 RNA-binding domain; that stretch reads SELLDILVEA…RGKKNYNKIV (65 aa).

The protein belongs to the class-I aminoacyl-tRNA synthetase family. TyrS type 1 subfamily. As to quaternary structure, homodimer.

It localises to the cytoplasm. It catalyses the reaction tRNA(Tyr) + L-tyrosine + ATP = L-tyrosyl-tRNA(Tyr) + AMP + diphosphate + H(+). Catalyzes the attachment of tyrosine to tRNA(Tyr) in a two-step reaction: tyrosine is first activated by ATP to form Tyr-AMP and then transferred to the acceptor end of tRNA(Tyr). The polypeptide is Tyrosine--tRNA ligase (Clostridium perfringens (strain SM101 / Type A)).